Reading from the N-terminus, the 300-residue chain is Protoheme IX farnesyltransferase 1 (300 aa).

Helical transmembrane passes span 28–48 (VVAL…PGAV), 50–70 (VQPL…AAAY), 106–126 (AMAI…TAWL), 150–170 (IVVG…AITG), 176–196 (ALLL…ALAI), 222–242 (CIML…LVGM), 243–263 (CGPL…YKAW), and 280–300 (FSIY…YLWS).

This sequence belongs to the UbiA prenyltransferase family. Protoheme IX farnesyltransferase subfamily.

Its subcellular location is the cell inner membrane. It carries out the reaction heme b + (2E,6E)-farnesyl diphosphate + H2O = Fe(II)-heme o + diphosphate. It functions in the pathway porphyrin-containing compound metabolism; heme O biosynthesis; heme O from protoheme: step 1/1. Functionally, converts heme B (protoheme IX) to heme O by substitution of the vinyl group on carbon 2 of heme B porphyrin ring with a hydroxyethyl farnesyl side group. This chain is Protoheme IX farnesyltransferase 1, found in Shewanella loihica (strain ATCC BAA-1088 / PV-4).